We begin with the raw amino-acid sequence, 302 residues long: Pyridoxal 5'-phosphate synthase subunit PdxS (302 aa).

D-ribose 5-phosphate is bound at residue aspartate 32. The active-site Schiff-base intermediate with D-ribose 5-phosphate is the lysine 89. Position 161 (glycine 161) interacts with D-ribose 5-phosphate. Arginine 173 contributes to the D-glyceraldehyde 3-phosphate binding site. D-ribose 5-phosphate contacts are provided by residues glycine 222 and 243-244 (GS). Residues 276–302 (ASNPGKGMKGEANADLSEGEKLQTRGV) are disordered. A compositionally biased stretch (basic and acidic residues) spans 293-302 (EGEKLQTRGV).

The protein belongs to the PdxS/SNZ family. In terms of assembly, in the presence of PdxT, forms a dodecamer of heterodimers.

It carries out the reaction aldehydo-D-ribose 5-phosphate + D-glyceraldehyde 3-phosphate + L-glutamine = pyridoxal 5'-phosphate + L-glutamate + phosphate + 3 H2O + H(+). It participates in cofactor biosynthesis; pyridoxal 5'-phosphate biosynthesis. Catalyzes the formation of pyridoxal 5'-phosphate from ribose 5-phosphate (RBP), glyceraldehyde 3-phosphate (G3P) and ammonia. The ammonia is provided by the PdxT subunit. Can also use ribulose 5-phosphate and dihydroxyacetone phosphate as substrates, resulting from enzyme-catalyzed isomerization of RBP and G3P, respectively. In Haloquadratum walsbyi (strain DSM 16790 / HBSQ001), this protein is Pyridoxal 5'-phosphate synthase subunit PdxS.